Reading from the N-terminus, the 429-residue chain is Gap junction gamma-2 protein (429 aa).

Topologically, residues 1–25 (MTNMSWSFLTRLLEEIHNHSTFVGK) are cytoplasmic. A helical membrane pass occupies residues 26–46 (VWLTVLVVFRIVLTAVGGESI). Residues 47 to 78 (YSDEQTKFTCNTRQPGCDNVCYDAFAPLSHVR) are Extracellular-facing. The chain crosses the membrane as a helical span at residues 79 to 99 (FWVFQIVVISTPSVMYLGYAV). Residues 100 to 214 (HRLARASQDE…EGLMRVYVAQ (115 aa)) are Cytoplasmic-facing. Positions 106–200 (SQDERRRASR…GPAGQHDGRR (95 aa)) are disordered. A compositionally biased stretch (basic residues) spans 112-123 (RASRRRPSRRAP). The segment covering 124–138 (RPPLPLPPPPHPGWP) has biased composition (pro residues). The segment covering 142–173 (DLGEEEPMLGLGEEDEDPGVAEGLGEDEEAED) has biased composition (acidic residues). The chain crosses the membrane as a helical span at residues 215 to 235 (LVARAAFEVAFLVGQYLLYGF). The Extracellular segment spans residues 236–263 (EVRPFFACSRQPCPHVVDCFVSRPTEKT). A helical transmembrane segment spans residues 264-284 (VFLLVMYVVSCLCLLLNLCEM). Over 285–429 (AHLGLGNAQD…SREGKTTVWI (145 aa)) the chain is Cytoplasmic. 2 disordered regions span residues 296 to 316 (VRGR…PPCA) and 361 to 429 (LGDL…TVWI). Positions 303–316 (PASPGPMPRPPPCA) are enriched in pro residues. Ser-366 carries the phosphoserine modification. The segment covering 372–395 (LPANARGPPKPGAPASGSGSATSG) has biased composition (low complexity).

The protein belongs to the connexin family. Gamma-type subfamily. In terms of assembly, a connexon is composed of a hexamer of connexins. Interacts with TJP1.

It localises to the cell membrane. Its subcellular location is the cell junction. The protein localises to the gap junction. Functionally, one gap junction consists of a cluster of closely packed pairs of transmembrane channels, the connexons, through which materials of low MW diffuse from one cell to a neighboring cell. May play a role in myelination in central and peripheral nervous systems. This is Gap junction gamma-2 protein (GJC2) from Bos taurus (Bovine).